Consider the following 1445-residue polypeptide: Protein HUA2-LIKE 1 (1445 aa).

The 58-residue stretch at 20-77 (LGDLVLAKVKGFPAWPAKIGQPEDWNQAPDPKKHFVQFYGTGEIGFVTPPDIQPFTSE) folds into the PWWP domain. 7 disordered regions span residues 133 to 197 (KYLN…SPDP), 211 to 302 (TCTD…DLNI), 319 to 356 (FENELGKSASGADESKRAAKRPRSEDAKDQKQCKSKRL), 409 to 439 (EHTSVSSFPGSLVKEGANHPEQKISSSSDSD), 460 to 491 (DDDDEDPKTPVHGGLSNIPIASTDAPKSANAS), 641 to 685 (GIPK…TSTP), and 797 to 835 (LTPSNHGRQSSSSNQAGTEENEERRFSSGHRSVGGSLSG). 2 stretches are compositionally biased toward polar residues: residues 173 to 187 (QDSSISNNRNTSPSS) and 211 to 225 (TCTDHSDGTGNNLVN). Composition is skewed to basic and acidic residues over residues 228–257 (RIIRKTTDDSNKRCKDEVRAKRVPDSRAAT), 274–293 (GQDHGSKKGQDHGCRKESSD), and 331–350 (DESKRAAKRPRSEDAKDQKQ). 2 stretches are compositionally biased toward polar residues: residues 660-673 (RVSSSHSQTANQRS) and 797-814 (LTPSNHGRQSSSSNQAGT). The CID domain maps to 838–979 (EAAISRDTFE…RYIGDLGASG (142 aa)). The tract at residues 1110–1203 (PATTCATELP…SLPLQPGFAP (94 aa)) is disordered. Residues 1124-1170 (GSPPLPHESPPSPPPQPPSSPPPPSSPPQLAPAPPPSDHCLPPPTAP) show a composition bias toward pro residues.

In terms of tissue distribution, expressed throughout young primordia, and vegetative and reproductive apices.

The protein localises to the nucleus. Functionally, probable transcription factor that acts with partial redundancy with HULK2 and HULK3. Plays diverse and essential roles in the control of plant development, physiology and flowering time. This Arabidopsis thaliana (Mouse-ear cress) protein is Protein HUA2-LIKE 1.